Here is a 404-residue protein sequence, read N- to C-terminus: Cysteine desulfurase IscS (404 aa).

Residues 75–76 (AT), Asn-155, Gln-183, and 203–205 (SAH) each bind pyridoxal 5'-phosphate. Lys-206 is modified (N6-(pyridoxal phosphate)lysine). Pyridoxal 5'-phosphate is bound at residue Thr-243. The Cysteine persulfide intermediate role is filled by Cys-328. Cys-328 is a binding site for [2Fe-2S] cluster.

The protein belongs to the class-V pyridoxal-phosphate-dependent aminotransferase family. NifS/IscS subfamily. As to quaternary structure, homodimer. Forms a heterotetramer with IscU, interacts with other sulfur acceptors. Requires pyridoxal 5'-phosphate as cofactor.

Its subcellular location is the cytoplasm. The enzyme catalyses (sulfur carrier)-H + L-cysteine = (sulfur carrier)-SH + L-alanine. Its pathway is cofactor biosynthesis; iron-sulfur cluster biosynthesis. Master enzyme that delivers sulfur to a number of partners involved in Fe-S cluster assembly, tRNA modification or cofactor biosynthesis. Catalyzes the removal of elemental sulfur atoms from cysteine to produce alanine. Functions as a sulfur delivery protein for Fe-S cluster synthesis onto IscU, an Fe-S scaffold assembly protein, as well as other S acceptor proteins. This chain is Cysteine desulfurase IscS, found in Vesicomyosocius okutanii subsp. Calyptogena okutanii (strain HA).